Consider the following 450-residue polypeptide: Bifunctional protein GlmU (450 aa).

A pyrophosphorylase region spans residues 1–226 (MLAVAVLAAG…PDEVNGINNR (226 aa)). UDP-N-acetyl-alpha-D-glucosamine contacts are provided by residues 7–10 (LAAG), lysine 21, glutamine 73, and 78–79 (GT). A Mg(2+)-binding site is contributed by aspartate 103. The UDP-N-acetyl-alpha-D-glucosamine site is built by glycine 140, glutamate 155, asparagine 170, and asparagine 224. Asparagine 224 is a binding site for Mg(2+). A linker region spans residues 227 to 247 (QQLAQCETMLQERLRHHWMAE). The interval 248–450 (GVTFVDPASC…IKENWAGPQG (203 aa)) is N-acetyltransferase. Positions 329 and 347 each coordinate UDP-N-acetyl-alpha-D-glucosamine. Histidine 359 serves as the catalytic Proton acceptor. UDP-N-acetyl-alpha-D-glucosamine contacts are provided by tyrosine 362 and asparagine 373. Residues alanine 376, 382 to 383 (NY), alanine 419, and arginine 436 each bind acetyl-CoA.

This sequence in the N-terminal section; belongs to the N-acetylglucosamine-1-phosphate uridyltransferase family. The protein in the C-terminal section; belongs to the transferase hexapeptide repeat family. Homotrimer. Mg(2+) is required as a cofactor.

Its subcellular location is the cytoplasm. The catalysed reaction is alpha-D-glucosamine 1-phosphate + acetyl-CoA = N-acetyl-alpha-D-glucosamine 1-phosphate + CoA + H(+). The enzyme catalyses N-acetyl-alpha-D-glucosamine 1-phosphate + UTP + H(+) = UDP-N-acetyl-alpha-D-glucosamine + diphosphate. It participates in nucleotide-sugar biosynthesis; UDP-N-acetyl-alpha-D-glucosamine biosynthesis; N-acetyl-alpha-D-glucosamine 1-phosphate from alpha-D-glucosamine 6-phosphate (route II): step 2/2. It functions in the pathway nucleotide-sugar biosynthesis; UDP-N-acetyl-alpha-D-glucosamine biosynthesis; UDP-N-acetyl-alpha-D-glucosamine from N-acetyl-alpha-D-glucosamine 1-phosphate: step 1/1. Its pathway is bacterial outer membrane biogenesis; LPS lipid A biosynthesis. Functionally, catalyzes the last two sequential reactions in the de novo biosynthetic pathway for UDP-N-acetylglucosamine (UDP-GlcNAc). The C-terminal domain catalyzes the transfer of acetyl group from acetyl coenzyme A to glucosamine-1-phosphate (GlcN-1-P) to produce N-acetylglucosamine-1-phosphate (GlcNAc-1-P), which is converted into UDP-GlcNAc by the transfer of uridine 5-monophosphate (from uridine 5-triphosphate), a reaction catalyzed by the N-terminal domain. The sequence is that of Bifunctional protein GlmU from Synechococcus sp. (strain RCC307).